Consider the following 186-residue polypeptide: Large ribosomal subunit protein uL10 (186 aa).

The protein belongs to the universal ribosomal protein uL10 family. In terms of assembly, part of the ribosomal stalk of the 50S ribosomal subunit. The N-terminus interacts with L11 and the large rRNA to form the base of the stalk. The C-terminus forms an elongated spine to which L12 dimers bind in a sequential fashion forming a multimeric L10(L12)X complex.

Its function is as follows. Forms part of the ribosomal stalk, playing a central role in the interaction of the ribosome with GTP-bound translation factors. In Nitrosococcus oceani (strain ATCC 19707 / BCRC 17464 / JCM 30415 / NCIMB 11848 / C-107), this protein is Large ribosomal subunit protein uL10.